The sequence spans 128 residues: Gene 39 protein (128 aa).

The polypeptide is Gene 39 protein (39) (Mycobacterium (Mycobacteriophage D29)).